Consider the following 240-residue polypeptide: Sugar fermentation stimulation protein homolog (240 aa).

It belongs to the SfsA family.

The polypeptide is Sugar fermentation stimulation protein homolog (Saccharolobus islandicus (strain M.16.4 / Kamchatka #3) (Sulfolobus islandicus)).